The sequence spans 299 residues: dTDP-4-dehydrorhamnose reductase (299 aa).

Residues 10–12 (GQV), Asp-30, 39–40 (DF), and 63–65 (AHT) each bind NADH. 11-12 (QV) lines the NADPH pocket. NADPH is bound by residues 39–40 (DF), 63–65 (AHT), and Tyr-102. Residue 104-105 (TD) participates in dTDP-beta-L-rhamnose binding. Residues Tyr-128 and Lys-132 each contribute to the NADH site. Positions 128 and 132 each coordinate NADPH. The active-site Proton donor/acceptor is Tyr-128. Trp-153 provides a ligand contact to dTDP-beta-L-rhamnose.

Belongs to the dTDP-4-dehydrorhamnose reductase family. Homodimer. Requires Mg(2+) as cofactor.

It catalyses the reaction dTDP-beta-L-rhamnose + NADP(+) = dTDP-4-dehydro-beta-L-rhamnose + NADPH + H(+). Its pathway is carbohydrate biosynthesis; dTDP-L-rhamnose biosynthesis. It participates in bacterial outer membrane biogenesis; LPS O-antigen biosynthesis. In terms of biological role, involved in the biosynthesis of the dTDP-L-rhamnose which is an important component of lipopolysaccharide (LPS). Catalyzes the reduction of dTDP-6-deoxy-L-lyxo-4-hexulose to yield dTDP-L-rhamnose. RmlD uses NADH and NADPH nearly equally well. In Shigella flexneri, this protein is dTDP-4-dehydrorhamnose reductase.